The primary structure comprises 447 residues: Signal recognition particle 54 kDa protein (447 aa).

GTP-binding positions include 103-110 (GVQGSGKT), 185-189 (DTAGR), and 245-248 (TKMD).

The protein belongs to the GTP-binding SRP family. SRP54 subfamily. As to quaternary structure, part of the signal recognition particle protein translocation system, which is composed of SRP and FtsY. Archaeal SRP consists of a 7S RNA molecule of 300 nucleotides and two protein subunits: SRP54 and SRP19.

The protein resides in the cytoplasm. The enzyme catalyses GTP + H2O = GDP + phosphate + H(+). Functionally, involved in targeting and insertion of nascent membrane proteins into the cytoplasmic membrane. Binds to the hydrophobic signal sequence of the ribosome-nascent chain (RNC) as it emerges from the ribosomes. The SRP-RNC complex is then targeted to the cytoplasmic membrane where it interacts with the SRP receptor FtsY. The protein is Signal recognition particle 54 kDa protein of Saccharolobus islandicus (strain M.16.27) (Sulfolobus islandicus).